A 317-amino-acid polypeptide reads, in one-letter code: R2-like ligand binding oxidase (317 aa).

Positions 73, 106, and 109 each coordinate Mn(2+). A cross-link (3-(O4'-tyrosyl)-valine (Val-Tyr)) is located at residues 76–167 (VTQDLQPFMA…ANQVRASVTY (92 aa)). Fe cation is bound at residue Glu-106. 3 residues coordinate Fe cation: Glu-172, Glu-207, and His-210.

It belongs to the ribonucleoside diphosphate reductase small chain family. R2-like ligand binding oxidase subfamily. Homodimer. Requires Fe cation as cofactor. It depends on Mn(2+) as a cofactor.

Probable oxidase. This chain is R2-like ligand binding oxidase, found in Saccharopolyspora erythraea (strain ATCC 11635 / DSM 40517 / JCM 4748 / NBRC 13426 / NCIMB 8594 / NRRL 2338).